A 605-amino-acid chain; its full sequence is Lysophospholipase 1 (605 aa).

The signal sequence occupies residues M1–A17. One can recognise a PLA2c domain in the interval S30–Y565. N-linked (GlcNAc...) asparagine glycans are attached at residues N199, N261, N399, N451, N465, N492, and N573.

It belongs to the lysophospholipase family.

The protein resides in the secreted. The enzyme catalyses a 1-acyl-sn-glycero-3-phosphocholine + H2O = sn-glycerol 3-phosphocholine + a fatty acid + H(+). Functionally, catalyzes the release of fatty acids from lysophospholipids. Phospholipase B may well contribute to pathogenicity by abetting the fungus in damaging and traversing host cell membranes, processes which likely increase the rapidity of disseminated infection. This Candida albicans (strain SC5314 / ATCC MYA-2876) (Yeast) protein is Lysophospholipase 1.